Reading from the N-terminus, the 1019-residue chain is UPF0182 protein Tery_0938 (1019 aa).

Transmembrane regions (helical) follow at residues Ile23–Thr43, Thr67–Leu87, Leu128–Leu148, Leu192–Trp212, Leu213–Ala233, Phe270–Ser290, Leu313–Leu333, Tyr355–Phe375, and Ala416–Val436.

Belongs to the UPF0182 family.

It localises to the cell membrane. The polypeptide is UPF0182 protein Tery_0938 (Trichodesmium erythraeum (strain IMS101)).